The following is a 432-amino-acid chain: Fibroleukin (432 aa).

The N-terminal stretch at 1 to 19 (MRLPGWLWLSSAVLAACRA) is a signal peptide. Asn-24 is a glycosylation site (N-linked (GlcNAc...) asparagine). Positions 71–157 (GSMEEVLKEV…QGRLETLHLV (87 aa)) form a coiled coil. Residues 100–122 (QADDHRDPGGNGGNGAETAEDSR) form a disordered region. 4 N-linked (GlcNAc...) asparagine glycosylation sites follow: Asn-172, Asn-228, Asn-256, and Asn-329. One can recognise a Fibrinogen C-terminal domain in the interval 197-429 (PVQHLIYKDC…QAKMMIRPKN (233 aa)). The cysteines at positions 206 and 235 are disulfide-linked. A disulfide bridge connects residues Cys-364 and Cys-377.

Homotetramer; disulfide-linked. In terms of tissue distribution, constitutively expressed in cytotoxic T-cells.

The protein localises to the secreted. In terms of biological role, converts prothrombin to thrombin. This chain is Fibroleukin (Fgl2), found in Mus musculus (Mouse).